Consider the following 296-residue polypeptide: Pantothenate synthetase (296 aa).

ATP is bound at residue 37 to 44; it reads MGALHTGH. Residue histidine 44 is the Proton donor of the active site. Glutamine 68 contacts (R)-pantoate. Glutamine 68 provides a ligand contact to beta-alanine. Position 160–163 (160–163) interacts with ATP; that stretch reads GQKD. A (R)-pantoate-binding site is contributed by glutamine 166. Residues valine 189 and 197-200 each bind ATP; that span reads TSSR.

The protein belongs to the pantothenate synthetase family. In terms of assembly, homodimer.

The protein resides in the cytoplasm. It carries out the reaction (R)-pantoate + beta-alanine + ATP = (R)-pantothenate + AMP + diphosphate + H(+). Its pathway is cofactor biosynthesis; (R)-pantothenate biosynthesis; (R)-pantothenate from (R)-pantoate and beta-alanine: step 1/1. Functionally, catalyzes the condensation of pantoate with beta-alanine in an ATP-dependent reaction via a pantoyl-adenylate intermediate. In Thermobifida fusca (strain YX), this protein is Pantothenate synthetase.